We begin with the raw amino-acid sequence, 392 residues long: p21-activated protein kinase-interacting protein 1 (392 aa).

WD repeat units lie at residues 33–72 (VADFTHHAHTASLSAVAVNSRFVVTGSKDETIHIYDMKKK), 73–113 (IEHG…AKKW), 114–155 (ECLK…LVEG), 156–195 (RSAFIKNIKQNAHIVEWSPRGEQYVVIIQNKIDIYQLDTA), 196–235 (SISGTITNEKRISSVKFLSESVLAVAGDEEVIRFFDCDSL), and 236–275 (VCLCEFKAHENRVKDMFSFEIPEHHVIVSASSDGFIKMWK). The segment at 312-392 (SLPPAAEPSP…RKKKKIKTMQ (81 aa)) is disordered. The residue at position 320 (S320) is a Phosphoserine. The segment covering 325–345 (EQSKIGKKEPGDTVHKEEKRS) has biased composition (basic and acidic residues). Residues 381-392 (KKRKKKKIKTMQ) show a composition bias toward basic residues.

As to quaternary structure, interacts with PAK1. As to expression, expressed in brain, colon, heart, kidney, liver, lung, muscle, peripheral blood leukocytes, placenta, small intestine, spleen and thymus.

The protein localises to the nucleus. It is found in the nucleolus. Negatively regulates the PAK1 kinase. PAK1 is a member of the PAK kinase family, which has been shown to play a positive role in the regulation of signaling pathways involving MAPK8 and RELA. PAK1 exists as an inactive homodimer, which is activated by binding of small GTPases such as CDC42 to an N-terminal regulatory domain. PAK1IP1 also binds to the N-terminus of PAK1, and inhibits the specific activation of PAK1 by CDC42. May be involved in ribosomal large subunit assembly. In Homo sapiens (Human), this protein is p21-activated protein kinase-interacting protein 1 (PAK1IP1).